Reading from the N-terminus, the 180-residue chain is uncharacterized protein (180 aa).

The Macro domain occupies 1 to 180; the sequence is MVEFEIVKGD…KDYERALRAV (180 aa).

This is an uncharacterized protein from Thermococcus kodakarensis (strain ATCC BAA-918 / JCM 12380 / KOD1) (Pyrococcus kodakaraensis (strain KOD1)).